The sequence spans 116 residues: Large ribosomal subunit protein uL18 (116 aa).

The protein belongs to the universal ribosomal protein uL18 family. In terms of assembly, part of the 50S ribosomal subunit; part of the 5S rRNA/L5/L18/L25 subcomplex. Contacts the 5S and 23S rRNAs.

In terms of biological role, this is one of the proteins that bind and probably mediate the attachment of the 5S RNA into the large ribosomal subunit, where it forms part of the central protuberance. This chain is Large ribosomal subunit protein uL18, found in Psychromonas ingrahamii (strain DSM 17664 / CCUG 51855 / 37).